We begin with the raw amino-acid sequence, 154 residues long: Ascorbate-specific PTS system EIIA component (154 aa).

One can recognise a PTS EIIA type-2 domain in the interval 6-150 (SLAENNSIRL…QEVLDLIDRT (145 aa)). His-68 functions as the Tele-phosphohistidine intermediate in the catalytic mechanism. Position 68 is a phosphohistidine (His-68).

Its subcellular location is the cytoplasm. The phosphoenolpyruvate-dependent sugar phosphotransferase system (sugar PTS), a major carbohydrate active transport system, catalyzes the phosphorylation of incoming sugar substrates concomitantly with their translocation across the cell membrane. The enzyme II UlaABC PTS system is involved in ascorbate transport. This is Ascorbate-specific PTS system EIIA component (ulaC) from Salmonella choleraesuis (strain SC-B67).